The chain runs to 268 residues: Fibroblast growth factor 8 (268 aa).

Positions 1–22 (MGSPRSALSCLLLHLLVLCLQA) are cleaved as a signal peptide. At glutamine 23 the chain carries Pyrrolidone carboxylic acid. Residues 29 to 87 (QKRGPGAGNPADTLGQGHEDRPFGQRSRAGKNFTNPAPNYPEEGSKEQRDSVLPKVTQR) form a disordered region. A glycan (N-linked (GlcNAc...) asparagine) is linked at asparagine 60. Basic and acidic residues predominate over residues 71–80 (EGSKEQRDSV). Asparagine 190 carries an N-linked (GlcNAc...) asparagine glycan.

Belongs to the heparin-binding growth factors family. Monomer. Homodimer. Interacts with FGFR1, FGFR2, FGFR3 and FGFR4. Affinity between fibroblast growth factors (FGFs) and their receptors is increased by heparan sulfate glycosaminoglycans that function as coreceptors. Post-translationally, the N-terminus is blocked. In terms of tissue distribution, absent in normal mammary glands and detected only in adult testis and ovary and in midgestational embryos.

Its subcellular location is the secreted. Functionally, plays an important role in the regulation of embryonic development, cell proliferation, cell differentiation and cell migration. Required for normal brain, eye, ear and limb development during embryogenesis. Required for normal development of the gonadotropin-releasing hormone (GnRH) neuronal system. Plays a role in neurite outgrowth in hippocampal cells. Cooperates with Wnt-1 in mouse mammary tumor virus-induced murine mammary tumorigenesis. In Mus musculus (Mouse), this protein is Fibroblast growth factor 8 (Fgf8).